A 487-amino-acid polypeptide reads, in one-letter code: Betaine aldehyde dehydrogenase (487 aa).

Residues isoleucine 27 and aspartate 93 each coordinate K(+). 149-151 (GAW) is an NAD(+) binding site. Lysine 161 serves as the catalytic Charge relay system. Residues 175–178 (KPSE) and 228–231 (SVPT) contribute to the NAD(+) site. Leucine 243 contributes to the K(+) binding site. The Proton acceptor role is filled by glutamate 249. Residues glycine 251, cysteine 283, and glutamate 384 each contribute to the NAD(+) site. Cysteine 283 (nucleophile) is an active-site residue. Cysteine 283 is subject to Cysteine sulfenic acid (-SOH). K(+)-binding residues include lysine 454 and glycine 457. Residue glutamate 461 is the Charge relay system of the active site.

This sequence belongs to the aldehyde dehydrogenase family. As to quaternary structure, dimer of dimers. The cofactor is K(+).

The catalysed reaction is betaine aldehyde + NAD(+) + H2O = glycine betaine + NADH + 2 H(+). Its pathway is amine and polyamine biosynthesis; betaine biosynthesis via choline pathway; betaine from betaine aldehyde: step 1/1. Its function is as follows. Involved in the biosynthesis of the osmoprotectant glycine betaine. Catalyzes the irreversible oxidation of betaine aldehyde to the corresponding acid. The sequence is that of Betaine aldehyde dehydrogenase from Brucella melitensis biotype 2 (strain ATCC 23457).